The following is a 394-amino-acid chain: MPKIETRTEPMVINMGPHHPSMHGVLRLMVTLDGEDVIDCEPVIGYLHRGMEKIAENRTNIMFIPYVSRWDYAAGMFNEAVTVNAPEKLAGIPVPKRASYIRVIMLELNRIANHLLWLGPFLADVGAQTPFFYIFREREYIYDLFEAATGMRFINNNYFRIGGVAADLTYGWVTKCRDFCDYFLPKVDEYERLITNNPIFVRRLQGVGKISREEAINWGLSGPMLRASGVKWDLRKVDHYECYDDFDWDVPVATEGDCLARYIVRIQEMRESVKIIRQALDGLPGGPYENLEAKRMLEGAKSEWNGFDYQYIGKKLSPTFKIPKGEHYVRVESGKGELGIYLIGDDNVFPWRWKIRPPDFNNLQVLPQLLKGMKVADIVAILGSIDVIMGSVDR.

The protein belongs to the complex I 49 kDa subunit family. As to quaternary structure, NDH-1 can be composed of about 15 different subunits; different subcomplexes with different compositions have been identified which probably have different functions.

It is found in the cellular thylakoid membrane. The catalysed reaction is a plastoquinone + NADH + (n+1) H(+)(in) = a plastoquinol + NAD(+) + n H(+)(out). The enzyme catalyses a plastoquinone + NADPH + (n+1) H(+)(in) = a plastoquinol + NADP(+) + n H(+)(out). In terms of biological role, NDH-1 shuttles electrons from an unknown electron donor, via FMN and iron-sulfur (Fe-S) centers, to quinones in the respiratory and/or the photosynthetic chain. The immediate electron acceptor for the enzyme in this species is believed to be plastoquinone. Couples the redox reaction to proton translocation, and thus conserves the redox energy in a proton gradient. Cyanobacterial NDH-1 also plays a role in inorganic carbon-concentration. The protein is NAD(P)H-quinone oxidoreductase subunit H of Thermosynechococcus vestitus (strain NIES-2133 / IAM M-273 / BP-1).